A 126-amino-acid polypeptide reads, in one-letter code: Large ribosomal subunit protein uL22 (126 aa).

The protein belongs to the universal ribosomal protein uL22 family. Part of the 50S ribosomal subunit.

In terms of biological role, this protein binds specifically to 23S rRNA; its binding is stimulated by other ribosomal proteins, e.g. L4, L17, and L20. It is important during the early stages of 50S assembly. It makes multiple contacts with different domains of the 23S rRNA in the assembled 50S subunit and ribosome. Its function is as follows. The globular domain of the protein is located near the polypeptide exit tunnel on the outside of the subunit, while an extended beta-hairpin is found that lines the wall of the exit tunnel in the center of the 70S ribosome. This Jannaschia sp. (strain CCS1) protein is Large ribosomal subunit protein uL22.